The chain runs to 110 residues: Large ribosomal subunit protein uL22 (110 aa).

It belongs to the universal ribosomal protein uL22 family. As to quaternary structure, part of the 50S ribosomal subunit.

In terms of biological role, this protein binds specifically to 23S rRNA; its binding is stimulated by other ribosomal proteins, e.g. L4, L17, and L20. It is important during the early stages of 50S assembly. It makes multiple contacts with different domains of the 23S rRNA in the assembled 50S subunit and ribosome. Its function is as follows. The globular domain of the protein is located near the polypeptide exit tunnel on the outside of the subunit, while an extended beta-hairpin is found that lines the wall of the exit tunnel in the center of the 70S ribosome. This Leptospira interrogans serogroup Icterohaemorrhagiae serovar copenhageni (strain Fiocruz L1-130) protein is Large ribosomal subunit protein uL22.